A 199-amino-acid polypeptide reads, in one-letter code: MTKVRARIELSVGQHSNIPAEMLSFEGLETEKEHVAIVFNQADKTQKTPLVRMHSECLTGDVFHSSRCDCGEQLEESINKMAISGGIILYLRQEGRGIGLYNKLDAYELQSKGMNTYEANNHLGFGDDLRDFKEAAQMLGALNINTIKLVTNNPKKIKDIQDYGITLDEVVHTHAHVKKGNENYLQSKVDHGHQLDLDK.

Residue 52 to 56 participates in GTP binding; sequence RMHSE. Zn(2+)-binding residues include cysteine 57, cysteine 68, and cysteine 70. GTP is bound by residues glutamine 73, 94-96, and threonine 116; that span reads EGR. Aspartate 128 (proton acceptor) is an active-site residue. Residue arginine 130 is the Nucleophile of the active site. Residues threonine 151 and lysine 156 each contribute to the GTP site.

It belongs to the GTP cyclohydrolase II family. Requires Zn(2+) as cofactor.

The catalysed reaction is GTP + 4 H2O = 2,5-diamino-6-hydroxy-4-(5-phosphoribosylamino)-pyrimidine + formate + 2 phosphate + 3 H(+). It functions in the pathway cofactor biosynthesis; riboflavin biosynthesis; 5-amino-6-(D-ribitylamino)uracil from GTP: step 1/4. Its function is as follows. Catalyzes the conversion of GTP to 2,5-diamino-6-ribosylamino-4(3H)-pyrimidinone 5'-phosphate (DARP), formate and pyrophosphate. The protein is GTP cyclohydrolase-2 of Aliivibrio salmonicida (strain LFI1238) (Vibrio salmonicida (strain LFI1238)).